A 230-amino-acid polypeptide reads, in one-letter code: Uracil-DNA glycosylase (230 aa).

The Proton acceptor role is filled by aspartate 70.

This sequence belongs to the uracil-DNA glycosylase (UDG) superfamily. UNG family.

The protein localises to the cytoplasm. It carries out the reaction Hydrolyzes single-stranded DNA or mismatched double-stranded DNA and polynucleotides, releasing free uracil.. Excises uracil residues from the DNA which can arise as a result of misincorporation of dUMP residues by DNA polymerase or due to deamination of cytosine. The chain is Uracil-DNA glycosylase from Pseudomonas entomophila (strain L48).